Reading from the N-terminus, the 99-residue chain is Class II hydrophobin 2 (99 aa).

A signal peptide spans 1-15 (MKFFVVAALFAGALA). Cystine bridges form between Cys-30/Cys-79 and Cys-40/Cys-70.

Belongs to the cerato-ulmin hydrophobin family. In terms of assembly, homotetramer. Further self-assembles to form highly ordered films at water-air interfaces through intermolecular interactions.

The protein resides in the secreted. It localises to the cell wall. In terms of biological role, aerial growth, conidiation, and dispersal of filamentous fungi in the environment rely upon a capability of their secreting small amphipathic proteins called hydrophobins (HPBs) with low sequence identity. Class I can self-assemble into an outermost layer of rodlet bundles on aerial cell surfaces, conferring cellular hydrophobicity that supports fungal growth, development and dispersal; whereas Class II form highly ordered films at water-air interfaces through intermolecular interactions but contribute nothing to the rodlet structure. HYD2 is a class II hydrophobin that contributes to the fruiting body development. The polypeptide is Class II hydrophobin 2 (Cordyceps militaris (Caterpillar fungus)).